The sequence spans 506 residues: Histidine--tRNA ligase, mitochondrial (506 aa).

The transit peptide at 1–33 (MHLLGLLPRRAWASLLSQLLRPPWASCTGAVRC) directs the protein to the mitochondrion. The residue at position 67 (Ser67) is a Phosphoserine. L-histidine-binding positions include 131 to 133 (DLT), Arg158, Gln174, Asp178, Arg327, and 331 to 332 (YY). N6-acetyllysine is present on Lys444.

It belongs to the class-II aminoacyl-tRNA synthetase family. Homodimer.

It is found in the mitochondrion. It catalyses the reaction tRNA(His) + L-histidine + ATP = L-histidyl-tRNA(His) + AMP + diphosphate + H(+). In terms of biological role, mitochondrial aminoacyl-tRNA synthetase that catalyzes the ATP-dependent ligation of histidine to the 3'-end of its cognate tRNA, via the formation of an aminoacyl-adenylate intermediate (His-AMP). The chain is Histidine--tRNA ligase, mitochondrial (HARS2) from Pongo abelii (Sumatran orangutan).